We begin with the raw amino-acid sequence, 534 residues long: UDP-glucuronosyltransferase 2A3 (534 aa).

The N-terminal stretch at 1 to 18 (MVSEKCVAAFFLLQLCWA) is a signal peptide. At 19–493 (GCGFCSKVLV…SWFQYHSLDV (475 aa)) the chain is on the extracellular side. An N-linked (GlcNAc...) asparagine glycan is attached at Asn102. At Lys135 the chain carries N6-succinyllysine. The N-linked (GlcNAc...) asparagine glycan is linked to Asn204. Residues 494–514 (IGFLLLCVVTLTFIITKFCLF) form a helical membrane-spanning segment. Residues 515-534 (VCQKLYMKESKKMGNRKKKN) are Cytoplasmic-facing.

Belongs to the UDP-glycosyltransferase family. In terms of tissue distribution, highly expressed in liver, with lower levels in duodenum and jejunum.

It is found in the membrane. The enzyme catalyses glucuronate acceptor + UDP-alpha-D-glucuronate = acceptor beta-D-glucuronoside + UDP + H(+). UDP-glucuronosyltransferases catalyze phase II biotransformation reactions in which lipophilic substrates are conjugated with glucuronic acid to increase water solubility and enhance excretion. They are of major importance in the conjugation and subsequent elimination of potentially toxic xenobiotics and endogenous compounds. The sequence is that of UDP-glucuronosyltransferase 2A3 (Ugt2a3) from Mus musculus (Mouse).